Consider the following 418-residue polypeptide: Probable endo-beta-1,4-glucanase celB (418 aa).

The N-terminal stretch at 1-18 is a signal peptide; the sequence is MVRTFAVTALALLPLVAA. Asn-46, Asn-118, and Asn-136 each carry an N-linked (GlcNAc...) asparagine glycan. Residue Glu-215 is the Nucleophile of the active site. The Proton donor role is filled by Glu-220. N-linked (GlcNAc...) asparagine glycans are attached at residues Asn-234 and Asn-291.

It belongs to the glycosyl hydrolase 7 (cellulase C) family.

The protein resides in the secreted. It carries out the reaction Endohydrolysis of (1-&gt;4)-beta-D-glucosidic linkages in cellulose, lichenin and cereal beta-D-glucans.. Has endoglucanase activity on substrates containing beta-1,4 glycosidic bonds, like in carboxymethylcellulose (CMC), hydroxyethylcellulose (HEC) and beta-glucan. Involved in the degradation of complex natural cellulosic substrates. This Aspergillus clavatus (strain ATCC 1007 / CBS 513.65 / DSM 816 / NCTC 3887 / NRRL 1 / QM 1276 / 107) protein is Probable endo-beta-1,4-glucanase celB (celB).